A 433-amino-acid polypeptide reads, in one-letter code: Glutamate-rich protein 2 (433 aa).

Disordered regions lie at residues 56 to 86 (VPAAGTAPAPPPPRALRPAPGPPRSAPLAPP), 113 to 161 (DSAS…KHPQ), 189 to 273 (SRQN…SIET), 308 to 344 (CLEDIEENLSDSTDGDGEEDSNNEDDEGPAKKETRAP), and 394 to 433 (EKAQEEEEEEESDEDSSSESEVDSSEDGSEDSSDECEDGS). The span at 63–85 (PAPPPPRALRPAPGPPRSAPLAP) shows a compositional bias: pro residues. A compositionally biased stretch (polar residues) spans 114–127 (SASQARGSEPSSSA). 2 stretches are compositionally biased toward basic and acidic residues: residues 199-214 (DPKEKLMSGSNKEKPQ) and 244-258 (ARKETSSKKIEDKVS). Residues 259–273 (LKSSENRPSSRSIET) show a composition bias toward polar residues. 2 stretches are compositionally biased toward acidic residues: residues 308 to 334 (CLEDIEENLSDSTDGDGEEDSNNEDDE) and 397 to 433 (QEEEEEEESDEDSSSESEVDSSEDGSEDSSDECEDGS).

The sequence is that of Glutamate-rich protein 2 (Erich2) from Rattus norvegicus (Rat).